The sequence spans 868 residues: DNA mismatch repair protein MutS (868 aa).

620–627 lines the ATP pocket; it reads GPNMGGKS.

This sequence belongs to the DNA mismatch repair MutS family.

In terms of biological role, this protein is involved in the repair of mismatches in DNA. It is possible that it carries out the mismatch recognition step. This protein has a weak ATPase activity. The protein is DNA mismatch repair protein MutS of Desulforamulus reducens (strain ATCC BAA-1160 / DSM 100696 / MI-1) (Desulfotomaculum reducens).